Consider the following 259-residue polypeptide: DNA repair protein RecO (259 aa).

It belongs to the RecO family.

Involved in DNA repair and RecF pathway recombination. This chain is DNA repair protein RecO, found in Syntrophus aciditrophicus (strain SB).